A 7570-amino-acid polypeptide reads, in one-letter code: Dystonin (7570 aa).

Calponin-homology (CH) domains lie at 35 to 138 (KVQK…LHFQ) and 151 to 255 (MSAK…DAFP). An actin-binding region spans residues 35 to 252 (KVQKKTFTKW…VITYVSSLYD (218 aa)). A phosphoserine mark is found at leucine 135, lysine 184, serine 236, and serine 237. 2 Spectrin repeats span residues 602 to 699 (EINM…RHLD) and 701 to 802 (LHNF…QHIK). Residues 887–944 (KTSIPIKAICDYRQIEITIYKDDECVLANNSHRAKWKVISPTGNEAMVPSVCFTVPPP) enclose the SH3 domain. 2 Spectrin repeats span residues 1293–1422 (KYYR…KFAG) and 1440–1540 (KEHV…QESQ). Phosphoserine is present on serine 1382. A Nuclear localization signal; in isoform 6 motif is present at residues 1383–1389 (PVKRRRM). Glutamate 1565 carries the post-translational modification Phosphoserine. 5 Plectin repeats span residues 1584–1626 (IRLL…QLKE), 1660–1703 (KVLE…LERQ), 1774–1817 (RLLS…LTYQ), 1818–1855 (VQTG…LEAQ), and 1856–1891 (RGYV…KILN). A Phosphoserine modification is found at serine 2229. Disordered stretches follow at residues 2317–2346 (SNTS…IEEY), 2383–2441 (LLND…DETA), and 2585–2616 (DYIY…GKPR). Over residues 2336 to 2345 (DKEDESEIEE) the composition is skewed to acidic residues. Residues 2385–2394 (NDQQNNTGTD) are compositionally biased toward low complexity. 3 stretches are compositionally biased toward acidic residues: residues 2395–2412 (TDSD…DDDH), 2430–2439 (YDTLQEENDE), and 2591–2605 (NDQD…DEEG). Serine 2919 carries the phosphoserine modification. Positions 3190–3221 (EASTVPSDSQMSDSSGVSPMTNSSELKPESRD) are disordered. The segment covering 3192–3209 (STVPSDSQMSDSSGVSPM) has biased composition (low complexity). Spectrin repeat units follow at residues 3395–3501 (LQHT…KQIM), 3643–3752 (QEYK…KELD), 3926–4040 (EKFD…NNLK), 4047–4153 (QHYE…EKLQ), 4160–4259 (LSVQ…ETLA), 4269–4368 (ELFE…EAVT), 4516–4621 (QKAQ…QKLE), 4628–4732 (TQFQ…DWID), 4742–4842 (QSLL…QHLQ), 4849–4951 (HQFQ…NKLK), 4958–5058 (LKYK…FCLE), 5068–5167 (QEVS…SFLE), 5174–5277 (GHFQ…EQVE), 5284–5388 (EEFY…AQLQ), 5395–5497 (GRFQ…RQLE), 5504–5715 (QQFH…KTLE), 5831–5933 (QQFD…LQLE), 5941–6041 (QFWE…VALD), 6048–6154 (TQFH…AKLL), 6161–6263 (EKFW…DKLE), 6270–6373 (VQYQ…HKLE), 6380–6482 (GQFQ…QQLD), 6489–6591 (KGFH…TKLE), 6598–6700 (MEFH…RSLD), 6707–6810 (KQFH…NKLE), 6817–6918 (GQFT…TRLE), 6925–7027 (EEFH…QRLA), and 7037–7167 (QELL…RKLN). At serine 3968 the chain carries Phosphoserine. Serine 4749 is modified (phosphoserine). Lysine 5470 participates in a covalent cross-link: Glycyl lysine isopeptide (Lys-Gly) (interchain with G-Cter in ubiquitin). 2 EF-hand domains span residues 7197–7232 (HKKS…SKFP) and 7233–7268 (TSRL…NKDA). Aspartate 7210, aspartate 7212, aspartate 7214, lysine 7216, glutamate 7221, aspartate 7246, aspartate 7248, aspartate 7250, tyrosine 7252, and glutamate 7257 together coordinate Ca(2+). Residues 7273 to 7351 (TDADKIEDEV…EFLVKNDPCR (79 aa)) enclose the GAR domain. Disordered stretches follow at residues 7358-7379 (KMLR…AKGR), 7395-7452 (SQGM…SKLR), and 7481-7570 (QFAD…SSKR). Residues 7362–7374 (SESNSSITTTQPT) are compositionally biased toward polar residues. 2 stretches are compositionally biased toward low complexity: residues 7411-7441 (SSRG…TTTP) and 7490-7504 (SRPG…GSRA). Serine 7432 bears the Phosphoserine mark. A phosphoserine mark is found at serine 7510, serine 7513, and serine 7525. Over residues 7519–7535 (EIQSVCSDVETVPQTHR) the composition is skewed to polar residues. Residues 7550-7553 (SKIP) carry the Microtubule tip localization signal motif.

Homodimer. Isoform 1 interacts (via N-terminus) with PLEC (via N-terminus). Interacts with the neuronal intermediate filament protein, PRPH. Interacts with DES. Interacts with SYNE3. Isoform 1 and isoform 6 can homodimerize (via N-terminus). Isoform 1 interacts (via N-terminus) with ACTN2. Isoform 1 interacts (via N-terminus) with PLEC (via N-terminus). Isoform 3 interacts (via N-terminus) with COL17A1 (via cytoplasmic region). Isoform 3 interacts (via N-terminus) with ITGB4 isoform beta-4a (via cytoplasmic region). Isoform 3 interacts (via N-terminus) with ERBIN (via C-terminus). Isoform 3 associates (via C-terminal) with KRT5-KRT14 (via rod region) intermediate filaments of keratins. Interacts with MAPRE1; probably required for targeting to the growing microtubule plus ends. Interacts with TMIGD2. Isoform 9 interacts with TMEM108. As to expression, isoform 1 is expressed in myoblasts (at protein level). Isoform 3 is expressed in the skin. Isoform 6 is expressed in the brain. Highly expressed in skeletal muscle and cultured keratinocytes.

The protein resides in the cytoplasm. The protein localises to the cytoskeleton. It localises to the stress fiber. Its subcellular location is the cell projection. It is found in the axon. The protein resides in the myofibril. The protein localises to the sarcomere. It localises to the z line. Its subcellular location is the h zone. It is found in the cell junction. The protein resides in the hemidesmosome. The protein localises to the nucleus. It localises to the nucleus envelope. Its subcellular location is the membrane. It is found in the endoplasmic reticulum membrane. The protein resides in the cell cortex. The protein localises to the cell membrane. Its function is as follows. Cytoskeletal linker protein. Acts as an integrator of intermediate filaments, actin and microtubule cytoskeleton networks. Required for anchoring either intermediate filaments to the actin cytoskeleton in neural and muscle cells or keratin-containing intermediate filaments to hemidesmosomes in epithelial cells. The proteins may self-aggregate to form filaments or a two-dimensional mesh. Regulates the organization and stability of the microtubule network of sensory neurons to allow axonal transport. Mediates docking of the dynein/dynactin motor complex to vesicle cargos for retrograde axonal transport through its interaction with TMEM108 and DCTN1. In terms of biological role, plays a structural role in the assembly of hemidesmosomes of epithelial cells; anchors keratin-containing intermediate filaments to the inner plaque of hemidesmosomes. Required for the regulation of keratinocyte polarity and motility; mediates integrin ITGB4 regulation of RAC1 activity. Required for bundling actin filaments around the nucleus. Functionally, regulates the organization and stability of the microtubule network of sensory neurons to allow axonal transport. This Homo sapiens (Human) protein is Dystonin.